We begin with the raw amino-acid sequence, 977 residues long: AP-2 complex subunit alpha-1 (977 aa).

Residues 614–702 are disordered; that stretch reads AKLKRKKGPG…PSLGPTPEEA (89 aa). Phosphoserine occurs at positions 626 and 652. The segment covering 646–657 has biased composition (low complexity); that stretch reads PTPSTVSTPSPS. The residue at position 653 (Thr653) is a Phosphothreonine. Ser655 carries the phosphoserine modification. A compositionally biased stretch (pro residues) spans 666–675; it reads APPPAAPPAP.

The protein belongs to the adaptor complexes large subunit family. Adaptor protein complex 2 (AP-2) is a heterotetramer composed of two large adaptins (alpha-type subunit AP2A1 or AP2A2 and beta-type subunit AP2B1), a medium adaptin (mu-type subunit AP2M1) and a small adaptin (sigma-type subunit AP2S1). Interacts with HIP1 and RAB11FIP2. Interacts with SLC12A5. Interacts with clathrin. Interacts with SGIP1. Interacts with RFTN1. Interacts with KIAA1107. Interacts with PICALM. Together with AP2B1 and AP2M1, it interacts with ADAM10; this interaction facilitates ADAM10 endocytosis from the plasma membrane during long-term potentiation in hippocampal neurons. Interacts with ABCB11; this interaction regulates cell membrane expression of ABCB11 through its internalization in a clathrin-dependent manner and its subsequent degradation. Probably interacts with ACE2 (via endocytic sorting signal motif); the interaction is inhibited by ACE2 phosphorylation. In terms of tissue distribution, expressed in the brain (at protein level). Isoform A: Expressed only in neuronal tissue and skeletal muscle. Isoform B: Widely expressed.

Its subcellular location is the cell membrane. It localises to the membrane. The protein localises to the coated pit. In terms of biological role, component of the adaptor protein complex 2 (AP-2). Adaptor protein complexes function in protein transport via transport vesicles in different membrane traffic pathways. Adaptor protein complexes are vesicle coat components and appear to be involved in cargo selection and vesicle formation. AP-2 is involved in clathrin-dependent endocytosis in which cargo proteins are incorporated into vesicles surrounded by clathrin (clathrin-coated vesicles, CCVs) which are destined for fusion with the early endosome. The clathrin lattice serves as a mechanical scaffold but is itself unable to bind directly to membrane components. Clathrin-associated adaptor protein (AP) complexes which can bind directly to both the clathrin lattice and to the lipid and protein components of membranes are considered to be the major clathrin adaptors contributing the CCV formation. AP-2 also serves as a cargo receptor to selectively sort the membrane proteins involved in receptor-mediated endocytosis. AP-2 seems to play a role in the recycling of synaptic vesicle membranes from the presynaptic surface. AP-2 recognizes Y-X-X-[FILMV] (Y-X-X-Phi) and [ED]-X-X-X-L-[LI] endocytosis signal motifs within the cytosolic tails of transmembrane cargo molecules. AP-2 may also play a role in maintaining normal post-endocytic trafficking through the ARF6-regulated, non-clathrin pathway. The AP-2 alpha subunit binds polyphosphoinositide-containing lipids, positioning AP-2 on the membrane. During long-term potentiation in hippocampal neurons, AP-2 is responsible for the endocytosis of ADAM10. The AP-2 alpha subunit acts via its C-terminal appendage domain as a scaffolding platform for endocytic accessory proteins. The AP-2 alpha and AP-2 sigma subunits are thought to contribute to the recognition of the [ED]-X-X-X-L-[LI] motif. This Mus musculus (Mouse) protein is AP-2 complex subunit alpha-1 (Ap2a1).